A 341-amino-acid chain; its full sequence is GTP 3',8-cyclase (341 aa).

A Radical SAM core domain is found at 11–231 (QKSRPLRDLR…RIINEDMPIE (221 aa)). Arg20 lines the GTP pocket. 2 residues coordinate [4Fe-4S] cluster: Cys27 and Cys31. Residue Tyr33 coordinates S-adenosyl-L-methionine. Position 34 (Cys34) interacts with [4Fe-4S] cluster. Arg75 serves as a coordination point for GTP. Gly79 lines the S-adenosyl-L-methionine pocket. Thr106 provides a ligand contact to GTP. Ser130 provides a ligand contact to S-adenosyl-L-methionine. GTP is bound at residue Lys167. Met201 contributes to the S-adenosyl-L-methionine binding site. Positions 265 and 268 each coordinate [4Fe-4S] cluster. 270 to 272 (RAR) provides a ligand contact to GTP. Cys282 contributes to the [4Fe-4S] cluster binding site.

The protein belongs to the radical SAM superfamily. MoaA family. As to quaternary structure, monomer and homodimer. Requires [4Fe-4S] cluster as cofactor.

It carries out the reaction GTP + AH2 + S-adenosyl-L-methionine = (8S)-3',8-cyclo-7,8-dihydroguanosine 5'-triphosphate + 5'-deoxyadenosine + L-methionine + A + H(+). Its pathway is cofactor biosynthesis; molybdopterin biosynthesis. Its function is as follows. Catalyzes the cyclization of GTP to (8S)-3',8-cyclo-7,8-dihydroguanosine 5'-triphosphate. This is GTP 3',8-cyclase from Bacillus licheniformis (strain ATCC 14580 / DSM 13 / JCM 2505 / CCUG 7422 / NBRC 12200 / NCIMB 9375 / NCTC 10341 / NRRL NRS-1264 / Gibson 46).